Reading from the N-terminus, the 776-residue chain is Meiotic expression up-regulated protein 1/2 (776 aa).

Coiled coils occupy residues 87-122, 173-227, 265-307, 362-430, and 496-595; these read YVLK…AQEE, FSEL…DLKE, YKVE…NDEE, KMSQ…RNNS, and INNQ…NTEL.

This chain is Meiotic expression up-regulated protein 1/2 (meu1), found in Schizosaccharomyces pombe (strain 972 / ATCC 24843) (Fission yeast).